Here is a 296-residue protein sequence, read N- to C-terminus: Nucleotide-binding protein SZO_12220 (296 aa).

13-20 (GMSGAGKT) serves as a coordination point for ATP. 63-66 (DMRS) is a binding site for GTP.

Belongs to the RapZ-like family.

Its function is as follows. Displays ATPase and GTPase activities. This chain is Nucleotide-binding protein SZO_12220, found in Streptococcus equi subsp. zooepidemicus (strain H70).